A 289-amino-acid polypeptide reads, in one-letter code: 4-hydroxy-tetrahydrodipicolinate synthase (289 aa).

Threonine 43 is a pyruvate binding site. The active-site Proton donor/acceptor is tyrosine 131. The active-site Schiff-base intermediate with substrate is lysine 160. Valine 200 lines the pyruvate pocket.

Belongs to the DapA family. Homotetramer; dimer of dimers.

Its subcellular location is the cytoplasm. The enzyme catalyses L-aspartate 4-semialdehyde + pyruvate = (2S,4S)-4-hydroxy-2,3,4,5-tetrahydrodipicolinate + H2O + H(+). Its pathway is amino-acid biosynthesis; L-lysine biosynthesis via DAP pathway; (S)-tetrahydrodipicolinate from L-aspartate: step 3/4. Functionally, catalyzes the condensation of (S)-aspartate-beta-semialdehyde [(S)-ASA] and pyruvate to 4-hydroxy-tetrahydrodipicolinate (HTPA). This chain is 4-hydroxy-tetrahydrodipicolinate synthase, found in Methanococcus maripaludis (strain DSM 14266 / JCM 13030 / NBRC 101832 / S2 / LL).